Consider the following 1275-residue polypeptide: Membrane-associated guanylate kinase, WW and PDZ domain-containing protein 2 (1275 aa).

Positions 17 to 101 constitute a PDZ 1 domain; that stretch reads ESVIGRNPEG…PLRLKCVKQG (85 aa). One can recognise a Guanylate kinase-like domain in the interval 109–283; the sequence is RHYLNLRFQK…PVYSQPEELK (175 aa). Positions 203 to 305 are disordered; it reads LPGATPSAEG…ENEDSDPLPD (103 aa). A compositionally biased stretch (basic and acidic residues) spans 280–295; sequence EELKDQMDDTKPTKPE. WW domains lie at 301-334 and 347-380; these read DPLP…DPRL and NELP…NPVL. Residues 301–380 are interaction with DDN; it reads DPLPDNWEMA…RRTQFENPVL (80 aa). Tyr-361 bears the Phosphotyrosine mark. PDZ domains lie at 425 to 509 and 604 to 682; these read STTL…CRGY and TLTI…HRGG. Position 685 is a phosphoserine (Ser-685). The tract at residues 698–740 is disordered; it reads ENQGSPQTSLSAPAVPQNLPFPPALHRSSFPDSTEAFDPRKPD. Residues 699–708 show a composition bias toward polar residues; sequence NQGSPQTSLS. A PDZ 4 domain is found at 777–859; sequence DVHLRRMESG…NGQVNLTVRR (83 aa). Position 826 is a phosphotyrosine (Tyr-826). A disordered region spans residues 868-912; it reads CPENGRSPGSVSTHHSSPRSDYATYSNSNHAAPSSNASPPEGFAS. A phosphoserine mark is found at Ser-883 and Ser-884. The segment covering 893-907 has biased composition (low complexity); the sequence is SNSNHAAPSSNASPP. The PDZ 5 domain occupies 919–1009; sequence DVVIHRKENE…SVTLRIIPQE (91 aa). Over residues 1010–1040 the composition is skewed to polar residues; it reads ELNSPTSAPSSEKQSPMAQQHSPLAQQSPLA. The tract at residues 1010–1128 is disordered; that stretch reads ELNSPTSAPS…PDTRQYPLSD (119 aa). Phosphoserine is present on Ser-1013. The span at 1067-1083 shows a compositional bias: basic and acidic residues; it reads NSYRSEVKARQDVKPDI. The PDZ 6 domain occupies 1139 to 1221; it reads TVDMEKGAKG…RVRLLLKRGT (83 aa).

The protein belongs to the MAGUK family. Interacts (via its WW domains) with DRPLA. Interacts (via its second PDZ domain) with PTEN (via unphosphorylated C-terminus); this interaction diminishes the degradation rate of PTEN. Interacts (via guanylate kinase domain) with DLGAP1. Interacts (via the PDZ domains) with GRIN2A, GRID2 and NLGN1. Interacts with CTNND2, CTNNB1 and MAGUIN-1. Interacts with ACVR2A, SMAD2 and SMAD3. Part of a complex consisting of MAGI2/ARIP1, ACVR2A, ACVR1B and SMAD3. May interact with HTR2A. Interacts with RAPGEF2. Identified in a complex with ACTN4, CASK, IQGAP1, NPHS1, SPTAN1 and SPTBN1. Interacts with DDN. Found in a complex, at least composed of KIDINS220, MAGI2, NTRK1 and RAPGEF2; the complex is mainly formed at late endosomes in a NGF-dependent manner. Interacts with RAPGEF2; the interaction occurs before or after nerve growth factor (NGF) stimulation. Interacts (via PDZ domain) with KIDINS220 (via C-terminal domain). Interacts with IGSF9 and HTR4. Interacts with DLL1. Found in a complex with IGSF9B and NLGN2; the interaction with IGSF9B is mediated via the PDZ 5 and PDZ 6 domains, while the interaction with NLGN2 is mediated via the WW1, WW2 and PDZ2 domains. Interacts (via PDZ 6 domain) with USH1G (via SAM domain); the interaction is triggered by phosphorylation of USH1G by CK2 and negatively regulates MAGI2-mediated endocytosis. Expressed throughout the retina except in the nuclear layers and the photoreceptor outer segments (at protein level). Highest retinal expression is observed in the outer plexiform layer, the outer limiting membrane and the inner segment of photoreceptor cells (at protein level). Expressed in brain.

The protein resides in the cytoplasm. Its subcellular location is the late endosome. The protein localises to the synapse. It localises to the synaptosome. It is found in the cell membrane. The protein resides in the cytoskeleton. Its subcellular location is the microtubule organizing center. The protein localises to the centrosome. It localises to the cell projection. It is found in the cilium. The protein resides in the centriole. Its subcellular location is the photoreceptor inner segment. The protein localises to the photoreceptor outer segment. In terms of biological role, seems to act as a scaffold molecule at synaptic junctions by assembling neurotransmitter receptors and cell adhesion proteins. Plays a role in nerve growth factor (NGF)-induced recruitment of RAPGEF2 to late endosomes and neurite outgrowth. May play a role in regulating activin-mediated signaling in neuronal cells. Enhances the ability of PTEN to suppress AKT1 activation. Plays a role in receptor-mediated clathrin-dependent endocytosis which is required for ciliogenesis. This chain is Membrane-associated guanylate kinase, WW and PDZ domain-containing protein 2 (Magi2), found in Mus musculus (Mouse).